Reading from the N-terminus, the 481-residue chain is UDP-N-acetylmuramoyl-L-alanyl-D-glutamate--L-lysine ligase (481 aa).

Ser-42 contacts UDP-N-acetyl-alpha-D-muramoyl-L-alanyl-D-glutamate. Residue 118-124 coordinates ATP; the sequence is GTKGKTT. UDP-N-acetyl-alpha-D-muramoyl-L-alanyl-D-glutamate is bound by residues Gln-158, 160-161, Ser-187, and Arg-195; that span reads TT. The residue at position 229 (Lys-229) is an N6-carboxylysine. Residues 404–407 carry the L-lysine recognition motif motif; it reads DDPN.

Belongs to the MurCDEF family. MurE subfamily. In terms of processing, carboxylation is probably crucial for Mg(2+) binding and, consequently, for the gamma-phosphate positioning of ATP.

Its subcellular location is the cytoplasm. The catalysed reaction is UDP-N-acetyl-alpha-D-muramoyl-L-alanyl-D-glutamate + L-lysine + ATP = UDP-N-acetyl-alpha-D-muramoyl-L-alanyl-gamma-D-glutamyl-L-lysine + ADP + phosphate + H(+). It functions in the pathway cell wall biogenesis; peptidoglycan biosynthesis. Its function is as follows. Catalyzes the addition of L-lysine to the nucleotide precursor UDP-N-acetylmuramoyl-L-alanyl-D-glutamate (UMAG) in the biosynthesis of bacterial cell-wall peptidoglycan. The sequence is that of UDP-N-acetylmuramoyl-L-alanyl-D-glutamate--L-lysine ligase from Streptococcus pyogenes serotype M28 (strain MGAS6180).